We begin with the raw amino-acid sequence, 142 residues long: Hemoglobin subunit alpha (142 aa).

In terms of domain architecture, Globin spans 2–142 (VLSAADKSNV…VGTVLTSKYR (141 aa)). Phosphoserine is present on serine 4. An N6-succinyllysine mark is found at lysine 8 and lysine 12. Lysine 17 carries the N6-acetyllysine; alternate modification. Lysine 17 carries the N6-succinyllysine; alternate modification. A Phosphotyrosine modification is found at tyrosine 25. Serine 36 is modified (phosphoserine). Lysine 41 carries the post-translational modification N6-succinyllysine. Phosphoserine is present on serine 50. Histidine 59 serves as a coordination point for O2. Histidine 88 is a binding site for heme b. Phosphoserine is present on serine 103. Residue threonine 109 is modified to Phosphothreonine. Residues serine 125 and serine 132 each carry the phosphoserine modification. A phosphothreonine mark is found at threonine 135 and threonine 138. The residue at position 139 (serine 139) is a Phosphoserine.

This sequence belongs to the globin family. As to quaternary structure, heterotetramer of two alpha chains and two beta chains. Red blood cells.

Its function is as follows. Involved in oxygen transport from the lung to the various peripheral tissues. In terms of biological role, hemopressin acts as an antagonist peptide of the cannabinoid receptor CNR1. Hemopressin-binding efficiently blocks cannabinoid receptor CNR1 and subsequent signaling. The chain is Hemoglobin subunit alpha (HBA) from Pantholops hodgsonii (Chiru).